Here is a 181-residue protein sequence, read N- to C-terminus: Methanesulfonate monooxygenase hydroxylase subunit beta (181 aa).

This sequence belongs to the bacterial ring-hydroxylating dioxygenase beta subunit family. As to quaternary structure, the MSA monooxygenase system consists of 4 proteins: the 2 subunits of the hydroxylase component (MsmA and MsmB), a ferredoxin (MsmC) and a ferredoxin reductase (MsmD). The hydroxylase component consists of a 3 alpha (MsmA) and 3 beta (MsmB) subunits.

The protein resides in the cytoplasm. It carries out the reaction methanesulfonate + NADH + O2 = sulfite + formaldehyde + NAD(+) + H2O. With respect to regulation, MSAMO is inhibited by metal chelators (such as bathophenanthroline, bathocuprione, neocuprione, alpha-alpha-dipyridil and sodium EDTA) and by sodium azide, sodium arsenate and potassium cyanide. In terms of biological role, methanesulfonate monooxygenase (MSAMO) mediates the primary degradation of methanesulfonic acid (MSA) to produce formaldehyd and inorganic sulfite by initial hydroxylation of the carbon atom prior to spontaneous cleavage of the unstable hydroxymethanesulfonic acid. MSAMO has a restricted substrate range that includes only the short-chain aliphatic sulfonates (methane- to butanesulfonate) and excludes all larger molecules, such as arylsulfonates and aromatic sulfonates. All MSAMO components are required for enzyme activity. This is Methanesulfonate monooxygenase hydroxylase subunit beta from Methylosulfonomonas methylovora.